The primary structure comprises 160 residues: Transcription elongation factor GreA (160 aa).

Residues 1–72 (MAEKTYPMTL…QISSLETKIR (72 aa)) are a coiled coil.

It belongs to the GreA/GreB family.

Functionally, necessary for efficient RNA polymerase transcription elongation past template-encoded arresting sites. The arresting sites in DNA have the property of trapping a certain fraction of elongating RNA polymerases that pass through, resulting in locked ternary complexes. Cleavage of the nascent transcript by cleavage factors such as GreA or GreB allows the resumption of elongation from the new 3'terminus. GreA releases sequences of 2 to 3 nucleotides. The polypeptide is Transcription elongation factor GreA (Streptococcus pneumoniae serotype 4 (strain ATCC BAA-334 / TIGR4)).